The following is a 163-amino-acid chain: Ribosome maturation factor RimP (163 aa).

The disordered stretch occupies residues 66-85; sequence ALDRDDPVPGPPYELEVSSP.

It belongs to the RimP family.

The protein resides in the cytoplasm. Required for maturation of 30S ribosomal subunits. In Kocuria rhizophila (strain ATCC 9341 / DSM 348 / NBRC 103217 / DC2201), this protein is Ribosome maturation factor RimP.